We begin with the raw amino-acid sequence, 842 residues long: MVAFTVDQMRSLMDTVTNVRNMSVIAHVDHGKSTLTDSLVQKAGIISAAKAGEARFMDTRKDEQERGITIKSTAISLYSEMPDEDVKDIAQNTEGNAFLINLIDSPGHVDFSSEVTAALRVTDGALVVVDTVEGVCVQTETVLRQALGERIKPVVCINKVDRALLELQVSKEDLYQSFSRTVESVNVIISTYADEILGDVQVYPSKGTVAFGSGLHGWAFTIRQFAQRYAKKFGVDKVKMMERLWGDSYFNPKTKKWTNKETDADGKQLERAFNMFVLDPIFRLFAAIMNFKKDEIPVLLEKLEINLKGDEKDQEGKALLKTVMKKFLPAADALLEMIVMNLPSPVTAQAYRAEQLYEGPADDANCMAIKRCDPKADLMLYVSKMVPTSDKGRFYAFGRVFAGTVRSGQKVRIQGPNYVPGKKDDLFVKAIQRVVLMMGRFVEPIDDCPAGNIIGLVGIDQFLLKSGTLTTDETAHNMKVMKFSVSPVVQVAVEVKNANDLPKLVEGLKRLSKSDPCVLTYMAETGEHIVAGTGELHLEICLQDLENDHAGVPLKISPPVVAYRETVETESSQTALSKSPNKHNRIYLKAEPIEEEVSLAIESGKINPRDDLKARARVMADEFGWDVTDARKIWCFGPDGNGPNLVVDQTKAVQYLNEIKDSVVAAFQWATKEGPIFGEQMRSVRVNILDVTLHADAIHRGGGQIIPTMRRATYAGFLLAEPKIQEPVFLVEIQCPESAVGGIYSVLNKKRGQVVSEEQRPGTPLFTVKAYLPVNESFGFTGELRQATGGQAFPQMVFDHWATLGSDPLDPTSKAGEIVTAARKRHGMKEVVPGWQEYYDKL.

Residues 17-253 (TNVRNMSVIA…LWGDSYFNPK (237 aa)) form the tr-type G domain. GTP contacts are provided by residues 26 to 33 (AHVDHGKS), 158 to 161 (NKVD), and 213 to 215 (SGL). H699 bears the Diphthamide mark.

This sequence belongs to the TRAFAC class translation factor GTPase superfamily. Classic translation factor GTPase family. EF-G/EF-2 subfamily.

It is found in the cytoplasm. It carries out the reaction GTP + H2O = GDP + phosphate + H(+). Its function is as follows. Catalyzes the GTP-dependent ribosomal translocation step during translation elongation. During this step, the ribosome changes from the pre-translocational (PRE) to the post-translocational (POST) state as the newly formed A-site-bound peptidyl-tRNA and P-site-bound deacylated tRNA move to the P and E sites, respectively. Catalyzes the coordinated movement of the two tRNA molecules, the mRNA and conformational changes in the ribosome. The sequence is that of Elongation factor 2 (EFT1) from Naumovozyma castellii (Yeast).